We begin with the raw amino-acid sequence, 96 residues long: Protein RnfH (96 aa).

It belongs to the UPF0125 (RnfH) family.

This chain is Protein RnfH, found in Salmonella agona (strain SL483).